The primary structure comprises 157 residues: Thiocyanate hydrolase subunit beta (157 aa).

Heterododecamer consisting of 4 alpha, 4 beta, and 4 gamma subunits.

The enzyme catalyses thiocyanate + H2O + 2 H(+) = carbonyl sulfide + NH4(+). It participates in organosulfur degradation; thiocyanate degradation. Its function is as follows. Involved in the degradation of thiocyanate. The protein is Thiocyanate hydrolase subunit beta (scnB) of Thiobacillus thioparus.